The sequence spans 161 residues: Large ribosomal subunit protein bL9 (161 aa).

It belongs to the bacterial ribosomal protein bL9 family.

Its function is as follows. Binds to the 23S rRNA. This is Large ribosomal subunit protein bL9 from Blochmanniella floridana.